The chain runs to 297 residues: HTH-type transcriptional regulator ArgP (297 aa).

The region spanning 4–60 (PDYRTLQALDAVIRERGFERAAQKLCITQSAVSQRIKQLENLFGQPLLVRTIPPRPT) is the HTH lysR-type domain. A DNA-binding region (H-T-H motif) is located at residues 21–40 (FERAAQKLCITQSAVSQRIK).

Belongs to the LysR transcriptional regulatory family. As to quaternary structure, homodimer.

Controls the transcription of genes involved in arginine and lysine metabolism. The polypeptide is HTH-type transcriptional regulator ArgP (Pectobacterium carotovorum subsp. carotovorum (strain PC1)).